Consider the following 814-residue polypeptide: DNA ligase (814 aa).

NAD(+) contacts are provided by residues 46 to 50 (DAEYD), 95 to 96 (SL), and glutamate 129. Lysine 131 serves as the catalytic N6-AMP-lysine intermediate. Residues arginine 152, glutamate 189, lysine 305, and lysine 329 each coordinate NAD(+). Residues cysteine 434, cysteine 437, cysteine 458, and cysteine 464 each contribute to the Zn(2+) site. The interval 526 to 549 (SAQRRTEGEPAPKKPTKKKGEEED) is disordered. Positions 735–814 (TSAAAFAGKT…DDWLAMLAEA (80 aa)) constitute a BRCT domain.

This sequence belongs to the NAD-dependent DNA ligase family. LigA subfamily. Requires Mg(2+) as cofactor. Mn(2+) serves as cofactor.

The catalysed reaction is NAD(+) + (deoxyribonucleotide)n-3'-hydroxyl + 5'-phospho-(deoxyribonucleotide)m = (deoxyribonucleotide)n+m + AMP + beta-nicotinamide D-nucleotide.. Functionally, DNA ligase that catalyzes the formation of phosphodiester linkages between 5'-phosphoryl and 3'-hydroxyl groups in double-stranded DNA using NAD as a coenzyme and as the energy source for the reaction. It is essential for DNA replication and repair of damaged DNA. The polypeptide is DNA ligase (Methylorubrum extorquens (strain CM4 / NCIMB 13688) (Methylobacterium extorquens)).